We begin with the raw amino-acid sequence, 193 residues long: GTP cyclohydrolase-2 (193 aa).

45-49 (RIHSE) serves as a coordination point for GTP. Zn(2+)-binding residues include Cys50, Cys61, and Cys63. Residues Gln66, 87–89 (EGR), and Thr109 each bind GTP. Catalysis depends on Asp121, which acts as the Proton acceptor. Arg123 functions as the Nucleophile in the catalytic mechanism. Positions 144 and 149 each coordinate GTP.

Belongs to the GTP cyclohydrolase II family. It depends on Zn(2+) as a cofactor.

It catalyses the reaction GTP + 4 H2O = 2,5-diamino-6-hydroxy-4-(5-phosphoribosylamino)-pyrimidine + formate + 2 phosphate + 3 H(+). It functions in the pathway cofactor biosynthesis; riboflavin biosynthesis; 5-amino-6-(D-ribitylamino)uracil from GTP: step 1/4. In terms of biological role, catalyzes the conversion of GTP to 2,5-diamino-6-ribosylamino-4(3H)-pyrimidinone 5'-phosphate (DARP), formate and pyrophosphate. The protein is GTP cyclohydrolase-2 of Campylobacter hominis (strain ATCC BAA-381 / DSM 21671 / CCUG 45161 / LMG 19568 / NCTC 13146 / CH001A).